The following is a 353-amino-acid chain: sn-glycerol-3-phosphate import ATP-binding protein UgpC 3 (353 aa).

The ABC transporter domain occupies 4–235 (IALKDVRKVY…PATTFVATFI (232 aa)). Residue 37 to 44 (GPSGCGKS) participates in ATP binding.

It belongs to the ABC transporter superfamily. sn-glycerol-3-phosphate importer (TC 3.A.1.1.3) family. As to quaternary structure, the complex is composed of two ATP-binding proteins (UgpC), two transmembrane proteins (UgpA and UgpE) and a solute-binding protein (UgpB).

The protein resides in the cell inner membrane. It catalyses the reaction sn-glycerol 3-phosphate(out) + ATP + H2O = sn-glycerol 3-phosphate(in) + ADP + phosphate + H(+). In terms of biological role, part of the ABC transporter complex UgpBAEC involved in sn-glycerol-3-phosphate (G3P) import. Responsible for energy coupling to the transport system. This Agrobacterium fabrum (strain C58 / ATCC 33970) (Agrobacterium tumefaciens (strain C58)) protein is sn-glycerol-3-phosphate import ATP-binding protein UgpC 3.